The following is a 792-amino-acid chain: Endonuclease MutS2 (792 aa).

334-341 (GPNTGGKT) contributes to the ATP binding site. One can recognise a Smr domain in the interval 717-792 (INLIGKTTDE…DAGVTIATFK (76 aa)).

Belongs to the DNA mismatch repair MutS family. MutS2 subfamily. Homodimer. Binds to stalled ribosomes, contacting rRNA.

Functionally, endonuclease that is involved in the suppression of homologous recombination and thus may have a key role in the control of bacterial genetic diversity. Acts as a ribosome collision sensor, splitting the ribosome into its 2 subunits. Detects stalled/collided 70S ribosomes which it binds and splits by an ATP-hydrolysis driven conformational change. Acts upstream of the ribosome quality control system (RQC), a ribosome-associated complex that mediates the extraction of incompletely synthesized nascent chains from stalled ribosomes and their subsequent degradation. Probably generates substrates for RQC. In Agathobacter rectalis (strain ATCC 33656 / DSM 3377 / JCM 17463 / KCTC 5835 / VPI 0990) (Eubacterium rectale), this protein is Endonuclease MutS2.